The sequence spans 331 residues: Ornithine carbamoyltransferase (331 aa).

Residues 55-58, Gln82, Arg106, and 133-136 each bind carbamoyl phosphate; these read STRT and HPTQ. L-ornithine-binding positions include Asn166, Asp230, and 234 to 235; that span reads SM. Residues 272 to 273 and Arg317 each bind carbamoyl phosphate; that span reads CL.

Belongs to the aspartate/ornithine carbamoyltransferase superfamily. OTCase family.

Its subcellular location is the cytoplasm. It carries out the reaction carbamoyl phosphate + L-ornithine = L-citrulline + phosphate + H(+). It participates in amino-acid biosynthesis; L-arginine biosynthesis; L-arginine from L-ornithine and carbamoyl phosphate: step 1/3. Reversibly catalyzes the transfer of the carbamoyl group from carbamoyl phosphate (CP) to the N(epsilon) atom of ornithine (ORN) to produce L-citrulline. This is Ornithine carbamoyltransferase from Neisseria gonorrhoeae (strain ATCC 700825 / FA 1090).